Here is a 1075-residue protein sequence, read N- to C-terminus: DNA-directed RNA polymerase subunit beta (1075 aa).

This sequence belongs to the RNA polymerase beta chain family. In terms of assembly, in plastids the minimal PEP RNA polymerase catalytic core is composed of four subunits: alpha, beta, beta', and beta''. When a (nuclear-encoded) sigma factor is associated with the core the holoenzyme is formed, which can initiate transcription.

The protein localises to the plastid. It localises to the chloroplast. The catalysed reaction is RNA(n) + a ribonucleoside 5'-triphosphate = RNA(n+1) + diphosphate. Its function is as follows. DNA-dependent RNA polymerase catalyzes the transcription of DNA into RNA using the four ribonucleoside triphosphates as substrates. This chain is DNA-directed RNA polymerase subunit beta, found in Pinus thunbergii (Japanese black pine).